We begin with the raw amino-acid sequence, 207 residues long: Recombination protein RecR (207 aa).

The segment at 62 to 77 adopts a C4-type zinc-finger fold; sequence CSRCNTFTEQDVCETC. Positions 85–184 constitute a Toprim domain; that stretch reads SVLCVVETPA…KVSRLARGVP (100 aa).

This sequence belongs to the RecR family.

Its function is as follows. May play a role in DNA repair. It seems to be involved in an RecBC-independent recombinational process of DNA repair. It may act with RecF and RecO. In Ralstonia nicotianae (strain ATCC BAA-1114 / GMI1000) (Ralstonia solanacearum), this protein is Recombination protein RecR.